Reading from the N-terminus, the 93-residue chain is uncharacterized protein (93 aa).

The segment at 35-72 (KSVPPPTPPKPVKKTPSPTLPKPSKQKQEPQVEVNEDR) is disordered. Basic and acidic residues predominate over residues 60–72 (QKQEPQVEVNEDR).

This is an uncharacterized protein from Ostreid herpesvirus 1 (isolate France) (OsHV-1).